The primary structure comprises 848 residues: Dynein axonemal intermediate chain 4 (848 aa).

2 disordered regions span residues 345 to 370 (SKAN…SETS) and 431 to 464 (EPEP…IHAE). Over residues 359–370 (PGSTTEKNSETS) the composition is skewed to polar residues. The span at 442-456 (ESAKHEEVEEESKKE) shows a compositional bias: basic and acidic residues. 6 WD repeats span residues 534 to 574 (QSPY…NVPV), 583 to 631 (KHLG…DCYD), 658 to 698 (SRQA…QYLD), 702 to 742 (GHKG…PSLS), 745 to 784 (PATS…LDPL), and 790 to 829 (NPGI…TVLE).

In terms of assembly, part of the multisubunit axonemal dynein complex formed at least of two heavy chains and a number of intermediate and light chains. Associated with axonemal dynein subunits such as, DNAH2, DNAI3, and DYNLT1. Interacts with DYNLT1.

The protein localises to the cytoplasm. The protein resides in the cytoskeleton. Its subcellular location is the flagellum axoneme. It is found in the cilium axoneme. It localises to the dynein axonemal particle. Functionally, plays a critical role in the assembly of axonemal dynein complex, thereby playing a role in ciliary motility. The sequence is that of Dynein axonemal intermediate chain 4 from Homo sapiens (Human).